The chain runs to 457 residues: tRNA modification GTPase MnmE (457 aa).

Arginine 24, glutamate 81, and lysine 121 together coordinate (6S)-5-formyl-5,6,7,8-tetrahydrofolate. The region spanning glycine 218–serine 380 is the TrmE-type G domain. Asparagine 228 provides a ligand contact to K(+). GTP is bound by residues asparagine 228–serine 233, threonine 247–threonine 253, aspartate 272–glycine 275, and asparagine 338–aspartate 341. Serine 232 lines the Mg(2+) pocket. The K(+) site is built by threonine 247, isoleucine 249, and threonine 252. Mg(2+) is bound at residue threonine 253. Lysine 457 is a binding site for (6S)-5-formyl-5,6,7,8-tetrahydrofolate.

Belongs to the TRAFAC class TrmE-Era-EngA-EngB-Septin-like GTPase superfamily. TrmE GTPase family. As to quaternary structure, homodimer. Heterotetramer of two MnmE and two MnmG subunits. Requires K(+) as cofactor.

It localises to the cytoplasm. In terms of biological role, exhibits a very high intrinsic GTPase hydrolysis rate. Involved in the addition of a carboxymethylaminomethyl (cmnm) group at the wobble position (U34) of certain tRNAs, forming tRNA-cmnm(5)s(2)U34. The sequence is that of tRNA modification GTPase MnmE from Baumannia cicadellinicola subsp. Homalodisca coagulata.